We begin with the raw amino-acid sequence, 224 residues long: 2-phospho-L-lactate guanylyltransferase (224 aa).

It belongs to the CofC family. As to quaternary structure, homodimer.

It catalyses the reaction (2S)-2-phospholactate + GTP + H(+) = (2S)-lactyl-2-diphospho-5'-guanosine + diphosphate. It functions in the pathway cofactor biosynthesis; coenzyme F420 biosynthesis. Guanylyltransferase that catalyzes the activation of (2S)-2-phospholactate (2-PL) as (2S)-lactyl-2-diphospho-5'-guanosine, via the condensation of 2-PL with GTP. It is involved in the biosynthesis of coenzyme F420, a hydride carrier cofactor. In Methanobrevibacter smithii (strain ATCC 35061 / DSM 861 / OCM 144 / PS), this protein is 2-phospho-L-lactate guanylyltransferase.